A 170-amino-acid polypeptide reads, in one-letter code: Peptide deformylase (170 aa).

Positions 94 and 136 each coordinate Fe cation. Glu-137 is a catalytic residue. Fe cation is bound at residue His-140.

This sequence belongs to the polypeptide deformylase family. It depends on Fe(2+) as a cofactor.

The enzyme catalyses N-terminal N-formyl-L-methionyl-[peptide] + H2O = N-terminal L-methionyl-[peptide] + formate. Its function is as follows. Removes the formyl group from the N-terminal Met of newly synthesized proteins. Requires at least a dipeptide for an efficient rate of reaction. N-terminal L-methionine is a prerequisite for activity but the enzyme has broad specificity at other positions. The chain is Peptide deformylase from Wolinella succinogenes (strain ATCC 29543 / DSM 1740 / CCUG 13145 / JCM 31913 / LMG 7466 / NCTC 11488 / FDC 602W) (Vibrio succinogenes).